The following is a 521-amino-acid chain: Amidase 1 (521 aa).

Residues Lys112 and Ser187 each act as charge relay system in the active site. Residues Ser187 and 208 to 211 (IGGS) contribute to the substrate site. Ser211 acts as the Acyl-ester intermediate in catalysis.

This sequence belongs to the amidase family.

The enzyme catalyses a monocarboxylic acid amide + H2O = a monocarboxylate + NH4(+). The protein operates within xenobiotic degradation. In terms of biological role, amidase; part of the Fusarium detoxification of benzoxazolinone cluster 1 (FDB1) involved in the degradation of benzoxazolinones produced by the host plant. Maize, wheat, and rye produce the 2 benzoxazinone phytoanticipins 2,4-dihy-droxy-7-methoxy-1,4-benzoxazin-3-one (DIMBOA) and 2,4-dihydroxy-1,4-benzoxazin-3-one (DIBOA) that, due to their inherent instability once released, spontaneously degrade to the more stable corresponding benzoxazolinones, 6-methoxy-2-benzoxazolinone (MBOA) and 2-benzoxazolinone (BOA), respectively. The first step in the detoxification of benzoxazolinones involves the hydrolysis of the cyclic ester bond of benzoxazolinones by the FDB1 cluster gamma-lactamase MBL1 to aminophenols. MBL1 is able to convert BOA into 2-aminophenol (2-AP), as well as MBOA into 5-methoxy-2-aminophenol (2-AMP). The FDB2 cluster N-malonyltransferase FDB2/NAT1 then metabolizes aminophenols via N-malonylation to non-toxic malonamic acids. FDB2/NAT1 converts 2-AP into N-(2-hydroxyphenyl) malonamic acid (HPMA) and 2-AMP into N-(2-hydroxy-4-methoxyphenyl) malonamic acid (HMPMA). The duplicated dienlactone hydrolases DLH1 and DLH2 may provide redundant function for hydrolyzing the lactone moiety in the BOA molecule. The roles of the amidases an other enzymes encoded by the 2 FDB clusters have not been identified so far. In Gibberella moniliformis (strain M3125 / FGSC 7600) (Maize ear and stalk rot fungus), this protein is Amidase 1.